Here is a 486-residue protein sequence, read N- to C-terminus: ATP synthase subunit beta (486 aa).

164–171 (GGAGVGKT) serves as a coordination point for ATP.

This sequence belongs to the ATPase alpha/beta chains family. In terms of assembly, F-type ATPases have 2 components, CF(1) - the catalytic core - and CF(0) - the membrane proton channel. CF(1) has five subunits: alpha(3), beta(3), gamma(1), delta(1), epsilon(1). CF(0) has four main subunits: a(1), b(1), b'(1) and c(9-12).

Its subcellular location is the cellular thylakoid membrane. The catalysed reaction is ATP + H2O + 4 H(+)(in) = ADP + phosphate + 5 H(+)(out). Functionally, produces ATP from ADP in the presence of a proton gradient across the membrane. The catalytic sites are hosted primarily by the beta subunits. The protein is ATP synthase subunit beta of Prochlorococcus marinus (strain AS9601).